We begin with the raw amino-acid sequence, 431 residues long: Adenylosuccinate synthetase (431 aa).

GTP contacts are provided by residues 13-19 (GDEGKGK) and 41-43 (GHT). Residue aspartate 14 is the Proton acceptor of the active site. Residues aspartate 14 and glycine 41 each contribute to the Mg(2+) site. Residues 14–17 (DEGK), 39–42 (NAGH), threonine 130, arginine 144, glutamine 225, threonine 240, and arginine 304 each bind IMP. The active-site Proton donor is the histidine 42. Substrate is bound at residue 300–306 (SVTGRPR). GTP contacts are provided by residues arginine 306, 332-334 (KLD), and 414-416 (STG).

It belongs to the adenylosuccinate synthetase family. As to quaternary structure, homodimer. Mg(2+) is required as a cofactor.

The protein resides in the cytoplasm. It catalyses the reaction IMP + L-aspartate + GTP = N(6)-(1,2-dicarboxyethyl)-AMP + GDP + phosphate + 2 H(+). It participates in purine metabolism; AMP biosynthesis via de novo pathway; AMP from IMP: step 1/2. Functionally, plays an important role in the de novo pathway of purine nucleotide biosynthesis. Catalyzes the first committed step in the biosynthesis of AMP from IMP. This chain is Adenylosuccinate synthetase, found in Bordetella avium (strain 197N).